Reading from the N-terminus, the 122-residue chain is NLLQFNKMIKEETGKNAIPFYAFYGCYCGGGGQGKPKDGTDRCCFVHDCCYGRLVNCNTKSDIYSYSLKEGYITCGKGTNCEEQICECDRVAAECFRRNLDTYNNGYMFYRDSKCTETSEEC.

7 cysteine pairs are disulfide-bonded: C26-C115, C28-C44, C43-C95, C49-C122, C50-C88, C57-C81, and C75-C86. Y27, G29, and G31 together coordinate Ca(2+). H47 is an active-site residue. D48 contacts Ca(2+). Residue D89 is part of the active site.

It depends on Ca(2+) as a cofactor. Expressed by the venom gland.

It is found in the secreted. It carries out the reaction a 1,2-diacyl-sn-glycero-3-phosphocholine + H2O = a 1-acyl-sn-glycero-3-phosphocholine + a fatty acid + H(+). Functionally, snake venom phospholipase A2 (PLA2) that inhibits neuromuscular transmission by blocking acetylcholine release from the nerve termini. PLA2 catalyzes the calcium-dependent hydrolysis of the 2-acyl groups in 3-sn-phosphoglycerides. This is Neutral phospholipase A2 agkistrodotoxin from Gloydius halys (Chinese water mocassin).